A 501-amino-acid chain; its full sequence is Probable cytosol aminopeptidase (501 aa).

Residues lysine 268 and aspartate 273 each coordinate Mn(2+). The active site involves lysine 280. Aspartate 291, aspartate 350, and glutamate 352 together coordinate Mn(2+). Arginine 354 is an active-site residue.

This sequence belongs to the peptidase M17 family. Mn(2+) is required as a cofactor.

It localises to the cytoplasm. The catalysed reaction is Release of an N-terminal amino acid, Xaa-|-Yaa-, in which Xaa is preferably Leu, but may be other amino acids including Pro although not Arg or Lys, and Yaa may be Pro. Amino acid amides and methyl esters are also readily hydrolyzed, but rates on arylamides are exceedingly low.. It catalyses the reaction Release of an N-terminal amino acid, preferentially leucine, but not glutamic or aspartic acids.. In terms of biological role, presumably involved in the processing and regular turnover of intracellular proteins. Catalyzes the removal of unsubstituted N-terminal amino acids from various peptides. This chain is Probable cytosol aminopeptidase, found in Nitrosococcus oceani (strain ATCC 19707 / BCRC 17464 / JCM 30415 / NCIMB 11848 / C-107).